A 451-amino-acid polypeptide reads, in one-letter code: Tubulin gamma-1 chain (451 aa).

142–148 lines the GTP pocket; the sequence is AGGTGSG.

This sequence belongs to the tubulin family.

Its subcellular location is the cytoplasm. The protein localises to the cytoskeleton. It is found in the microtubule organizing center. The protein resides in the centrosome. It localises to the spindle. Functionally, tubulin is the major constituent of microtubules. The gamma chain is found at microtubule organizing centers (MTOC) such as the spindle poles or the centrosome, suggesting that it is involved in the minus-end nucleation of microtubule assembly. This chain is Tubulin gamma-1 chain (tubg1), found in Xenopus laevis (African clawed frog).